Here is a 94-residue protein sequence, read N- to C-terminus: Large ribosomal subunit protein bL25 (94 aa).

Belongs to the bacterial ribosomal protein bL25 family. As to quaternary structure, part of the 50S ribosomal subunit; part of the 5S rRNA/L5/L18/L25 subcomplex. Contacts the 5S rRNA. Binds to the 5S rRNA independently of L5 and L18.

Its function is as follows. This is one of the proteins that binds to the 5S RNA in the ribosome where it forms part of the central protuberance. The protein is Large ribosomal subunit protein bL25 of Enterobacter sp. (strain 638).